Consider the following 90-residue polypeptide: Putative regulatory protein cce_4590 (90 aa).

It belongs to the RemA family.

In Crocosphaera subtropica (strain ATCC 51142 / BH68) (Cyanothece sp. (strain ATCC 51142)), this protein is Putative regulatory protein cce_4590.